A 419-amino-acid polypeptide reads, in one-letter code: UPF0229 protein Tbd_1233 (419 aa).

The tract at residues 85-108 is disordered; the sequence is GDRIDRPAGEGGGGSGGSPDGEGM. The span at 93 to 104 shows a compositional bias: gly residues; it reads GEGGGGSGGSPD.

The protein belongs to the UPF0229 family.

The chain is UPF0229 protein Tbd_1233 from Thiobacillus denitrificans (strain ATCC 25259 / T1).